Reading from the N-terminus, the 339-residue chain is DNA-directed RNA polymerase subunit alpha (339 aa).

Residues 1-235 (MVREEVAVST…DLFIPFLHGE (235 aa)) form an alpha N-terminal domain (alpha-NTD) region. Residues 267–339 (KAIALECIFI…FTIDLPKNKF (73 aa)) form an alpha C-terminal domain (alpha-CTD) region.

Belongs to the RNA polymerase alpha chain family. In terms of assembly, in plastids the minimal PEP RNA polymerase catalytic core is composed of four subunits: alpha, beta, beta', and beta''. When a (nuclear-encoded) sigma factor is associated with the core the holoenzyme is formed, which can initiate transcription.

It is found in the plastid. It localises to the chloroplast. It carries out the reaction RNA(n) + a ribonucleoside 5'-triphosphate = RNA(n+1) + diphosphate. Its function is as follows. DNA-dependent RNA polymerase catalyzes the transcription of DNA into RNA using the four ribonucleoside triphosphates as substrates. This is DNA-directed RNA polymerase subunit alpha from Drimys granadensis.